A 317-amino-acid polypeptide reads, in one-letter code: mRNA 3'-end-processing protein yth-1 (317 aa).

A disordered region spans residues 1 to 20; the sequence is MATTTQTTTNSLPSGAGGPQ. C3H1-type zinc fingers lie at residues 51–78, 93–120, 121–149, 150–177, and 179–202; these read PADR…HVTA, GFGS…HEYN, LRKM…HIDP, LSRL…HFRR, and LCLY…HPRW. Residues 202–217 show a composition bias toward basic and acidic residues; it reads WTADKDMEKPRAKGEG. Residues 202-317 are disordered; that stretch reads WTADKDMEKP…GRGGFRGKGH (116 aa). Residues 223–237 are compositionally biased toward low complexity; that stretch reads QQQQQQQQQQHMGDA. The segment covering 253–288 has biased composition (basic and acidic residues); the sequence is YMDRERERDRDNREREMMMQGRDRDGGGHDRHKDRF. Positions 289–301 are enriched in gly residues; sequence GGGGGGGGGGRGR. Over residues 302–317 the composition is skewed to basic residues; the sequence is GGWRGRGRGGFRGKGH.

This sequence belongs to the CPSF4/YTH1 family.

It is found in the nucleus. Component of the cleavage factor I (CF I) involved in pre-mRNA 3'-end processing. In Neurospora crassa (strain ATCC 24698 / 74-OR23-1A / CBS 708.71 / DSM 1257 / FGSC 987), this protein is mRNA 3'-end-processing protein yth-1 (yth-1).